The primary structure comprises 1129 residues: Tyrosine-protein kinase JAK2 (1129 aa).

Residues Pro-35–His-378 form the FERM domain. Tyr-117 bears the Phosphotyrosine; by autocatalysis mark. The SH2; atypical domain maps to His-399 to Gln-480. Protein kinase domains lie at Leu-542–Phe-806 and Leu-846–Gln-1118. Leu-852–Val-860 is an ATP binding site. Tyr-865 is modified (phosphotyrosine; by autocatalysis). Lys-879 contributes to the ATP binding site. 2 positions are modified to phosphotyrosine; by autocatalysis: Tyr-963 and Tyr-969. Residue Asp-973 is the Proton acceptor of the active site. Residues Tyr-1004 and Tyr-1005 each carry the phosphotyrosine; by autocatalysis modification.

Belongs to the protein kinase superfamily. Tyr protein kinase family. JAK subfamily. Autophosphorylated, leading to regulate its activity.

The protein localises to the endomembrane system. The protein resides in the nucleus. It catalyses the reaction L-tyrosyl-[protein] + ATP = O-phospho-L-tyrosyl-[protein] + ADP + H(+). Its activity is regulated as follows. Regulated by autophosphorylation, can both activate or decrease activity. Heme regulates its activity by enhancing the phosphorylation on Tyr-1004 and Tyr-1005. Non-receptor tyrosine kinase involved in various processes such as cell growth, development, differentiation or histone modifications. Mediates essential signaling events in both innate and adaptive immunity. In the cytoplasm, plays a pivotal role in signal transduction via its association with cytokine receptors. Following ligand-binding to cell surface receptors, phosphorylates specific tyrosine residues on the cytoplasmic tails of the receptor, creating docking sites for STATs proteins. Subsequently, phosphorylates the STATs proteins once they are recruited to the receptor. Phosphorylated STATs then form homodimer or heterodimers and translocate to the nucleus to activate gene transcription. For example, cell stimulation with erythropoietin (EPO) during erythropoiesis leads to JAK2 autophosphorylation, activation, and its association with erythropoietin receptor (EPOR) that becomes phosphorylated in its cytoplasmic domain. Then, STAT5 (STAT5A or STAT5B) is recruited, phosphorylated and activated by JAK2. Once activated, dimerized STAT5 translocates into the nucleus and promotes the transcription of several essential genes involved in the modulation of erythropoiesis. Part of a signaling cascade that is activated by increased cellular retinol and that leads to the activation of STAT5 (STAT5A or STAT5B). In the nucleus, plays a key role in chromatin by specifically mediating phosphorylation of 'Tyr-41' of histone H3 (H3Y41ph), a specific tag that promotes exclusion of CBX5 (HP1 alpha) from chromatin. Up-regulates the potassium voltage-gated channel activity of KCNA3. The protein is Tyrosine-protein kinase JAK2 of Gallus gallus (Chicken).